The sequence spans 113 residues: Large ribosomal subunit protein uL22 (113 aa).

The protein belongs to the universal ribosomal protein uL22 family. In terms of assembly, part of the 50S ribosomal subunit.

This protein binds specifically to 23S rRNA; its binding is stimulated by other ribosomal proteins, e.g. L4, L17, and L20. It is important during the early stages of 50S assembly. It makes multiple contacts with different domains of the 23S rRNA in the assembled 50S subunit and ribosome. Its function is as follows. The globular domain of the protein is located near the polypeptide exit tunnel on the outside of the subunit, while an extended beta-hairpin is found that lines the wall of the exit tunnel in the center of the 70S ribosome. This chain is Large ribosomal subunit protein uL22, found in Magnetococcus marinus (strain ATCC BAA-1437 / JCM 17883 / MC-1).